A 276-amino-acid polypeptide reads, in one-letter code: Diaminopimelate epimerase (276 aa).

Positions 13, 46, and 66 each coordinate substrate. Cysteine 75 serves as the catalytic Proton donor. Substrate contacts are provided by residues 76–77 (GN), asparagine 159, asparagine 192, and 210–211 (ER). The active-site Proton acceptor is cysteine 219. Residue 220 to 221 (GT) participates in substrate binding.

It belongs to the diaminopimelate epimerase family. As to quaternary structure, homodimer.

It is found in the cytoplasm. It catalyses the reaction (2S,6S)-2,6-diaminopimelate = meso-2,6-diaminopimelate. It participates in amino-acid biosynthesis; L-lysine biosynthesis via DAP pathway; DL-2,6-diaminopimelate from LL-2,6-diaminopimelate: step 1/1. Its function is as follows. Catalyzes the stereoinversion of LL-2,6-diaminopimelate (L,L-DAP) to meso-diaminopimelate (meso-DAP), a precursor of L-lysine and an essential component of the bacterial peptidoglycan. This Hahella chejuensis (strain KCTC 2396) protein is Diaminopimelate epimerase.